We begin with the raw amino-acid sequence, 64 residues long: ICEBs1 excisionase (64 aa).

Functionally, required for the excision of the integrative and conjugative element ICEBs1. Excision of ICEBs1 requires two sites, attL and attR, at the left and right ends of the integrated ICEBs1. In Bacillus subtilis (strain 168), this protein is ICEBs1 excisionase (xis).